Reading from the N-terminus, the 528-residue chain is MAGYKPVVIQTYPVLGEKITQDTLYWNNYKTPVQIKEFGAVSKVDFSPQPPYNYAVTASSRIHIYGRYSQEPVKTFSRFKDTAYCATFRQDGQLLVAGSEDGVVQLFDISGRAPLRQFEGHTKAVHTVDFTADKYHVVSGADDYTVKLWDIPNSKEILTFKEHSDYVRCGCASKLNPDLFVTGSYDHTVKMFDARTNKNVLCVEHGQPVESVLLFPSGGLLVSAGGRYVKVWDMLKGGQLLVSLKNHHKTVTCLCLSSSGQRLLSGSLDRKVKIYSTTSYKVVHSFDYAASILSLALSHQDETVVVGMTNGILSVKHRKSEAKKESLPRRRRPAYRTFIKGKIYTKQRDDIVVTRPAKKHLEWYDRDLKSFRISKALDRVLEPNCVIKTPEVTVSIIKELNRRGVLANALAGRDEKEITRVLNFLIRNLSQPRFAPVLINAAEIIIDIYLPVIGQSSVVDKKFIVLQGLVEKEIDYQRELLETLGMMDMLFATMTRNGSAPVWEHVPAELPEEKTESPRQPSDTDKNS.

N-acetylalanine is present on Ala-2. WD repeat units follow at residues 36–75, 78–117, 120–159, 162–202, 204–242, 246–285, and 287–326; these read KEFG…PVKT, RFKD…PLRQ, GHTK…EILT, EHSD…NVLC, EHGQ…QLLV, NHHK…VVHS, and DYAA…KKES. Lys-249 is covalently cross-linked (Glycyl lysine isopeptide (Lys-Gly) (interchain with G-Cter in SUMO2)). Positions 508-528 are disordered; sequence AELPEEKTESPRQPSDTDKNS. Residues 511–528 are compositionally biased toward basic and acidic residues; that stretch reads PEEKTESPRQPSDTDKNS.

Part of the small subunit (SSU) processome, composed of more than 70 proteins and the RNA chaperone small nucleolar RNA (snoRNA) U3. May be a component of the proposed t-UTP subcomplex of the ribosomal small subunit (SSU) processome containing at least UTP4, WDR43, HEATR1, UTP15, WDR75. Interacts directly with UTP4 and WDR43.

The protein localises to the nucleus. Its subcellular location is the nucleolus. Its function is as follows. Ribosome biogenesis factor. Involved in nucleolar processing of pre-18S ribosomal RNA. Required for optimal pre-ribosomal RNA transcription by RNA polymerase I. Part of the small subunit (SSU) processome, first precursor of the small eukaryotic ribosomal subunit. During the assembly of the SSU processome in the nucleolus, many ribosome biogenesis factors, an RNA chaperone and ribosomal proteins associate with the nascent pre-rRNA and work in concert to generate RNA folding, modifications, rearrangements and cleavage as well as targeted degradation of pre-ribosomal RNA by the RNA exosome. The polypeptide is U3 small nucleolar RNA-associated protein 15 homolog (Rattus norvegicus (Rat)).